Consider the following 301-residue polypeptide: Small ribosomal subunit protein uS2 (301 aa).

This sequence belongs to the universal ribosomal protein uS2 family. In terms of assembly, component of the small ribosomal subunit. Mature ribosomes consist of a small (40S) and a large (60S) subunit. The 40S subunit contains about 33 different proteins and 1 molecule of RNA (18S). The 60S subunit contains about 49 different proteins and 3 molecules of RNA (28S, 5.8S and 5S). Interacts with ribosomal protein S21.

The protein resides in the cytoplasm. Functionally, required for the assembly and/or stability of the 40S ribosomal subunit. Required for the processing of the 20S rRNA-precursor to mature 18S rRNA in a late step of the maturation of 40S ribosomal subunits. The protein is Small ribosomal subunit protein uS2 of Brugia malayi (Filarial nematode worm).